The chain runs to 375 residues: DNA replication and repair protein RecF (375 aa).

Residue 30 to 37 (GENAQGKT) coordinates ATP.

Belongs to the RecF family.

It localises to the cytoplasm. The RecF protein is involved in DNA metabolism; it is required for DNA replication and normal SOS inducibility. RecF binds preferentially to single-stranded, linear DNA. It also seems to bind ATP. In Latilactobacillus sakei subsp. sakei (strain 23K) (Lactobacillus sakei subsp. sakei), this protein is DNA replication and repair protein RecF.